Consider the following 420-residue polypeptide: Phosphoglycerate kinase (420 aa).

Val26, Asp27, Tyr28, Asn29, Gln42, Arg43, Ser66, His67, Gly69, Arg70, Leu125, Arg126, His173, and Arg174 together coordinate (2R)-3-phosphoglycerate. Position 199 is a phosphotyrosine (Tyr199). The residue at position 206 (Ser206) is a Phosphoserine. A calmodulin binding region spans residues 209–228 (KPFLAILGGAKVSDKIKLIE). ADP is bound at residue Gly217. CDP is bound at residue Gly217. The AMP site is built by Ala218 and Lys219. ATP is bound at residue Ala218. Ala218 is a Mg(2+) binding site. Asp222 contributes to the CDP binding site. Asp222 contributes to the Mg(2+) binding site. Lys223 contacts AMP. Lys223 contributes to the ATP binding site. Residue Gly241 coordinates ADP. Residue Gly241 participates in CDP binding. AMP-binding residues include Gly242 and Gly316. ATP-binding residues include Gly242 and Gly316. Positions 341 and 346 each coordinate CDP. Phe346 contributes to the ADP binding site. Glu347 provides a ligand contact to AMP. Glu347, Asp378, and Thr379 together coordinate ATP. Mg(2+) is bound at residue Asp378. A Phosphoserine modification is found at Ser393.

Belongs to the phosphoglycerate kinase family. In terms of assembly, monomer. Interacts with calmodulin in the presence of Ca(2+). It depends on Mg(2+) as a cofactor.

It is found in the cytoplasm. The enzyme catalyses (2R)-3-phosphoglycerate + ATP = (2R)-3-phospho-glyceroyl phosphate + ADP. It functions in the pathway carbohydrate degradation; glycolysis; pyruvate from D-glyceraldehyde 3-phosphate: step 2/5. This is Phosphoglycerate kinase from Dictyostelium discoideum (Social amoeba).